The chain runs to 151 residues: Transcription antitermination protein NusB (151 aa).

This sequence belongs to the NusB family.

Functionally, involved in transcription antitermination. Required for transcription of ribosomal RNA (rRNA) genes. Binds specifically to the boxA antiterminator sequence of the ribosomal RNA (rrn) operons. This chain is Transcription antitermination protein NusB, found in Thermodesulfovibrio yellowstonii (strain ATCC 51303 / DSM 11347 / YP87).